Here is a 230-residue protein sequence, read N- to C-terminus: Flagellar L-ring protein (230 aa).

An N-terminal signal peptide occupies residues 1–18 (MNRLNIAVSCLATALLFG). A lipid anchor (N-palmitoyl cysteine) is attached at cysteine 19. Cysteine 19 carries the S-diacylglycerol cysteine lipid modification.

It belongs to the FlgH family. The basal body constitutes a major portion of the flagellar organelle and consists of four rings (L,P,S, and M) mounted on a central rod.

The protein resides in the cell outer membrane. It is found in the bacterial flagellum basal body. Assembles around the rod to form the L-ring and probably protects the motor/basal body from shearing forces during rotation. The chain is Flagellar L-ring protein from Legionella pneumophila (strain Corby).